Consider the following 358-residue polypeptide: Methionine aminopeptidase 2 (358 aa).

H109 lines the substrate pocket. Residues D130, D141, and H210 each coordinate a divalent metal cation. Residue H218 coordinates substrate. The a divalent metal cation site is built by E243 and E339.

It belongs to the peptidase M24A family. Methionine aminopeptidase eukaryotic type 2 subfamily. Co(2+) is required as a cofactor. The cofactor is Zn(2+). Requires Mn(2+) as cofactor. It depends on Fe(2+) as a cofactor.

Its subcellular location is the cytoplasm. It carries out the reaction Release of N-terminal amino acids, preferentially methionine, from peptides and arylamides.. Cotranslationally removes the N-terminal methionine from nascent proteins. The N-terminal methionine is often cleaved when the second residue in the primary sequence is small and uncharged (Met-Ala-, Cys, Gly, Pro, Ser, Thr, or Val). In Encephalitozoon cuniculi (strain GB-M1) (Microsporidian parasite), this protein is Methionine aminopeptidase 2.